A 509-amino-acid polypeptide reads, in one-letter code: MSQFAREIVRNAIYNTSSPDADSVSLRKATTTILLIGVTYCILVGIYRVTLHPLAKYPGPKLAAVTRLWHSYHLCTGDIVSVLSRAHEAYGPVLRIAPDEVLFISSRAWDDIYGARPGKPEMDKDTPLYKGPTAPHSIVTVDGELHRFYRRLLAKGFSDAALREQEPVIQRNINLLVEKLHKEVAAGKTPEMTAWFNYATFDLIGELAFGETYGCLENSHYHPWVEMILEVMKLRAMTHAVGYYPWIFHILMWFVPKSLREKFVTHRRYTHDKVQRRMDQKIHYKDLTTNLVDPQNGLERYEIDGNCSTLIIAGSETTATALSATLYFLTQNENAKRKVIGEIRTTFNNAGDINSISVNQLKYLSACMNEALRIFPPGPAVFPRRVPQGGDFIDGHWIPGGTQVGIAHYCINRSRRNFVDPDKFIPERWLGDPTYQTDDRHAVQPFSYGPRNCIAHNLARLEMRLVLARLIWEFDWELAPGSERWEEEALVFNVWSTKPLMIKFTPVAR.

Asparagine 15 carries N-linked (GlcNAc...) asparagine glycosylation. The chain crosses the membrane as a helical span at residues 31–51; the sequence is TTILLIGVTYCILVGIYRVTL. N-linked (GlcNAc...) asparagine glycosylation is found at asparagine 306 and asparagine 412. Cysteine 453 lines the heme pocket.

The protein belongs to the cytochrome P450 family. Requires heme as cofactor.

It localises to the membrane. Its pathway is secondary metabolite biosynthesis. Functionally, cytochrome P450 monooxygenase; part of the gene cluster that mediates the biosynthesis of the fungal neurotoxin cyclopiazonic acid (CPA), a nanomolar inhibitor of Ca(2+)-ATPase with a unique pentacyclic indole tetramic acid scaffold. The hybrid two module polyketide synthase-nonribosomal peptide synthetase (PKS-NRPS) cpaS incorporates acetyl-CoA, malonyl-CoA, and tryptophan (Trp) and utilizes a C-terminal redox-incompetent reductase domain to make and release the tryptophan tetramic acid, cyclo-acetoacetyl-L-tryptophan (c-AATrp), as the first intermediate in the pathway. CpaS catalyzes a Dieckmann-type cyclization on the N-acetoacetyl-Trp intermediate bound in thioester linkage to the phosphopantetheinyl arm of the T domain to form and release c-AATrp. CpaD then regiospecifically dimethylallylates c-AATrp to form beta-cyclopiazonic acid. CpaD discriminates against free Trp but accepts tryptophan-containing thiohydantoins, diketopiperazines, and linear peptides as substrates for C4-prenylation and also acts as a regiospecific O-dimethylallyltransferase (DMAT) on a tyrosine-derived tetramic acid. The beta-cyclopiazonate dehydrogenase cpaO then carries out the dehydrogenation of beta-CPA to yield an unstable enimine product, which is captured by intramolecular cyclization to create the pentacyclic fused scaffold of alpha-cyclopiazonate. Finally, the cytochrome P450 monooxygenase cpaH mediates the conversion of CPA into the less toxic 2-oxocyclopiazonic acid, the end product of the CPA pathway in A.oryza. The chain is Cytochrome P450 monooxygenase cpaH from Aspergillus oryzae (Yellow koji mold).